The following is a 360-amino-acid chain: DNA replication and repair protein RecF (360 aa).

Residue 30-37 (GQNGSGKT) participates in ATP binding.

The protein belongs to the RecF family.

It localises to the cytoplasm. In terms of biological role, the RecF protein is involved in DNA metabolism; it is required for DNA replication and normal SOS inducibility. RecF binds preferentially to single-stranded, linear DNA. It also seems to bind ATP. The chain is DNA replication and repair protein RecF from Shewanella loihica (strain ATCC BAA-1088 / PV-4).